A 300-amino-acid chain; its full sequence is RNA polymerase sigma factor RpoH (300 aa).

The sigma-70 factor domain-2 stretch occupies residues 53–122 (LVTSHLRLVA…IQEYILRSWS (70 aa)). An Interaction with polymerase core subunit RpoC motif is present at residues 77-80 (EVVS). A sigma-70 factor domain-4 region spans residues 231 to 282 (AMGVLNDRERRIFEARRLAEDPVTLEELSSEFDISRERVRQIEVRAFEKVQE). Positions 255–274 (LEELSSEFDISRERVRQIEV) form a DNA-binding region, H-T-H motif.

Belongs to the sigma-70 factor family. RpoH subfamily. In terms of assembly, interacts with the RNA polymerase core enzyme.

It localises to the cytoplasm. In terms of biological role, sigma factors are initiation factors that promote the attachment of RNA polymerase to specific initiation sites and are then released. This sigma factor is involved in regulation of expression of heat shock genes. The chain is RNA polymerase sigma factor RpoH from Rhizobium radiobacter (Agrobacterium tumefaciens).